We begin with the raw amino-acid sequence, 256 residues long: Thiazole synthase (256 aa).

The active-site Schiff-base intermediate with DXP is the Lys95. Residues Gly156, 182–183 (AG), and 204–205 (NT) each bind 1-deoxy-D-xylulose 5-phosphate.

Belongs to the ThiG family. In terms of assembly, homotetramer. Forms heterodimers with either ThiH or ThiS.

It localises to the cytoplasm. The catalysed reaction is [ThiS sulfur-carrier protein]-C-terminal-Gly-aminoethanethioate + 2-iminoacetate + 1-deoxy-D-xylulose 5-phosphate = [ThiS sulfur-carrier protein]-C-terminal Gly-Gly + 2-[(2R,5Z)-2-carboxy-4-methylthiazol-5(2H)-ylidene]ethyl phosphate + 2 H2O + H(+). It functions in the pathway cofactor biosynthesis; thiamine diphosphate biosynthesis. In terms of biological role, catalyzes the rearrangement of 1-deoxy-D-xylulose 5-phosphate (DXP) to produce the thiazole phosphate moiety of thiamine. Sulfur is provided by the thiocarboxylate moiety of the carrier protein ThiS. In vitro, sulfur can be provided by H(2)S. The protein is Thiazole synthase of Shigella dysenteriae serotype 1 (strain Sd197).